Reading from the N-terminus, the 220-residue chain is GTP cyclohydrolase 1 (220 aa).

Residues Cys109, His112, and Cys180 each contribute to the Zn(2+) site.

This sequence belongs to the GTP cyclohydrolase I family. In terms of assembly, toroid-shaped homodecamer, composed of two pentamers of five dimers.

The catalysed reaction is GTP + H2O = 7,8-dihydroneopterin 3'-triphosphate + formate + H(+). It participates in cofactor biosynthesis; 7,8-dihydroneopterin triphosphate biosynthesis; 7,8-dihydroneopterin triphosphate from GTP: step 1/1. The chain is GTP cyclohydrolase 1 from Yersinia pseudotuberculosis serotype O:1b (strain IP 31758).